The following is a 420-amino-acid chain: MFDTVCTLPLSADLFSQALHPKEPVVSVGLSSGHVQTFRLPSDEVDSDDDGASTSSSRTGRGHIDTMWRTRRHKGSCRCLGFGVDGEMLYSAGTDGLVKAAKAETGVVENKIAIPLDKNGSVDAPTIIHALSPQTLLLATDSSALHLYDLRIPYSKVSARPEQSHHPHDDYISSLTPLPPSDTSTSGFSKQWVTTGGTTLAVTDLRRGVLVRSEDQEEELVSSVYIDGLPSSGTSRGAKVVVGGSGGVLTLWEKGAWDDQDERVYVQRESGGGESLETLAVVPDDLGKGKMVAVGLGNGAVKFVRIGANRVVSEVMHDETEGVVGLGFDVEGRMVSGGGQIVKVWHEAVDSGDGVNGNETGGKRAFGDDSDEDSDDGDDDDDSGDSDQENKRGDARKKRKKGKTPKRGGGQAVMAFHDLD.

WD repeat units lie at residues 9 to 48 (PLSADLFSQALHPKEPVVSVGLSSGHVQTFRLPSDEVDSD), 72 to 111 (RHKGSCRCLGFGVDGEMLYSAGTDGLVKAAKAETGVVENK), 117 to 158 (DKNG…SKVS), 221 to 262 (VSSV…DQDE), 271 to 314 (GGGE…VVSE), and 318 to 355 (DETEGVVGLGFDVEGRMVSGGGQIVKVWHEAVDSGDGV). A disordered region spans residues 39-63 (RLPSDEVDSDDDGASTSSSRTGRGH). The disordered stretch occupies residues 350 to 420 (DSGDGVNGNE…QAVMAFHDLD (71 aa)). Over residues 368-387 (DDSDEDSDDGDDDDDSGDSD) the composition is skewed to acidic residues. Basic residues predominate over residues 394-406 (DARKKRKKGKTPK).

The protein belongs to the WD repeat WDR55 family.

It is found in the nucleus. It localises to the nucleolus. The chain is WD repeat-containing protein jip5 (jip5) from Aspergillus terreus (strain NIH 2624 / FGSC A1156).